The primary structure comprises 387 residues: Patatin-02 (387 aa).

The first 23 residues, 1–23, serve as a signal peptide directing secretion; sequence MATTKSFLILIVMILATTSSTFA. One can recognise a PNPLA domain in the interval 32–230; sequence LSIDGGGIKG…TVADPALLSV (199 aa). The short motif at 36-41 is the GXGXXG element; it reads GGGIKG. The GXSXG motif lies at 75 to 79; the sequence is GTSTG. The active-site Nucleophile is the Ser77. Asn115 is a glycosylation site (N-linked (GlcNAc...) asparagine). The active-site Proton acceptor is Asp216. The DGA/G signature appears at 216–218; it reads DGA. The stretch at 361-385 forms a coiled coil; sequence ETYEEALKRFAKLLSDRKKLRANKA.

It belongs to the patatin family. In terms of tissue distribution, tuber and stolon.

The protein resides in the vacuole. Functionally, probable lipolytic acyl hydrolase (LAH), an activity which is thought to be involved in the response of tubers to pathogens. This is Patatin-02 from Solanum tuberosum (Potato).